A 546-amino-acid chain; its full sequence is CTP synthase (546 aa).

Residues 1-265 form an amidoligase domain region; sequence MTKYVFVTGG…DEIVCHKLNI (265 aa). Residue S13 participates in CTP binding. S13 is a UTP binding site. Residues 14–19 and D71 contribute to the ATP site; that span reads SLGKGI. Residues D71 and E139 each coordinate Mg(2+). Residues 146–148, 186–191, and K222 contribute to the CTP site; these read DIE and KTKPTQ. UTP contacts are provided by residues 186–191 and K222; that span reads KTKPTQ. The Glutamine amidotransferase type-1 domain maps to 290–543; that stretch reads KIAFVGKYVD…VKAALANQKA (254 aa). L-glutamine is bound at residue G351. Residue C378 is the Nucleophile; for glutamine hydrolysis of the active site. Residues 379-382, E402, and R469 each bind L-glutamine; that span reads LGMQ. Residues H516 and E518 contribute to the active site.

This sequence belongs to the CTP synthase family. Homotetramer.

The catalysed reaction is UTP + L-glutamine + ATP + H2O = CTP + L-glutamate + ADP + phosphate + 2 H(+). It catalyses the reaction L-glutamine + H2O = L-glutamate + NH4(+). It carries out the reaction UTP + NH4(+) + ATP = CTP + ADP + phosphate + 2 H(+). It functions in the pathway pyrimidine metabolism; CTP biosynthesis via de novo pathway; CTP from UDP: step 2/2. Its activity is regulated as follows. Allosterically activated by GTP, when glutamine is the substrate; GTP has no effect on the reaction when ammonia is the substrate. The allosteric effector GTP functions by stabilizing the protein conformation that binds the tetrahedral intermediate(s) formed during glutamine hydrolysis. Inhibited by the product CTP, via allosteric rather than competitive inhibition. Functionally, catalyzes the ATP-dependent amination of UTP to CTP with either L-glutamine or ammonia as the source of nitrogen. Regulates intracellular CTP levels through interactions with the four ribonucleotide triphosphates. In Dechloromonas aromatica (strain RCB), this protein is CTP synthase.